The following is a 433-amino-acid chain: Zinc finger and SCAN domain-containing protein 4 (433 aa).

One can recognise an SCAN box domain in the interval 44–126 (RMVLNSFQDS…RFMEDLTDDS (83 aa)). 2 stretches are compositionally biased toward polar residues: residues 162–184 (SAQTPREANMGTPSQTSQDTSLE) and 277–298 (QPEQSSPESALTHQSNEGNSTC). Disordered regions lie at residues 162-199 (SAQTPREANMGTPSQTSQDTSLETGEGCEDEQDGCNSS) and 272-298 (AGCISQPEQSSPESALTHQSNEGNSTC). C2H2-type zinc fingers lie at residues 312–334 (YKCEECPKVFKYLCHLLAHQRRH), 340–362 (FVCPECQKGFFQISDLRVHQIIH), 368–390 (FTCSMCEKSFSHKTNLRSHERIH), and 396–418 (YTCPFCKTSYRQSSTYHRHMRTH). The tract at residues 414-433 (HMRTHEKITPPSVPSTPEAS) is disordered.

It localises to the nucleus. The protein localises to the chromosome. It is found in the telomere. In terms of biological role, embryonic stem (ES) cell-specific transcription factor required to regulate ES cell pluripotency. Binds telomeres and plays a key role in genomic stability in ES cells by regulating telomere elongation. Acts as an activator of spontaneous telomere sister chromatid exchange (T-SCE) and telomere elongation in undifferentiated ES cells. This chain is Zinc finger and SCAN domain-containing protein 4 (ZSCAN4), found in Pongo pygmaeus (Bornean orangutan).